Here is a 268-residue protein sequence, read N- to C-terminus: Undecaprenyl-diphosphatase (268 aa).

Transmembrane regions (helical) follow at residues 43–63 (FWKT…LAIY), 85–105 (IGVL…GTFI), 108–128 (VLFN…VLLW), 141–161 (AMAF…AAMV), 184–204 (AAEF…VYDV), 217–237 (FIII…VKTF), and 246–266 (FTFF…ALAL).

It belongs to the UppP family.

It is found in the cell inner membrane. It carries out the reaction di-trans,octa-cis-undecaprenyl diphosphate + H2O = di-trans,octa-cis-undecaprenyl phosphate + phosphate + H(+). In terms of biological role, catalyzes the dephosphorylation of undecaprenyl diphosphate (UPP). Confers resistance to bacitracin. The polypeptide is Undecaprenyl-diphosphatase (Afipia carboxidovorans (strain ATCC 49405 / DSM 1227 / KCTC 32145 / OM5) (Oligotropha carboxidovorans)).